The sequence spans 210 residues: Large ribosomal subunit protein uL3 (210 aa).

It belongs to the universal ribosomal protein uL3 family. As to quaternary structure, part of the 50S ribosomal subunit. Forms a cluster with proteins L14 and L19.

In terms of biological role, one of the primary rRNA binding proteins, it binds directly near the 3'-end of the 23S rRNA, where it nucleates assembly of the 50S subunit. This is Large ribosomal subunit protein uL3 from Caldicellulosiruptor bescii (strain ATCC BAA-1888 / DSM 6725 / KCTC 15123 / Z-1320) (Anaerocellum thermophilum).